Consider the following 360-residue polypeptide: Ferredoxin--NADP reductase, leaf isozyme, chloroplastic (360 aa).

A chloroplast-targeting transit peptide spans 1–52 (MAAAVTAAVSLPYSNSTSLPIRTSIVAPERLVFKKVSLNNVSISGRVGTIRA). The FAD-binding FR-type domain occupies 81–203 (KEPYVGRCLL…TGPVGKEMLM (123 aa)). Residues 139 to 142 (RLYS), 160 to 162 (CVK), Tyr166, 177 to 179 (VCS), and Thr218 contribute to the FAD site. 2 residues coordinate NADP(+): Ser142 and Lys162. NADP(+)-binding positions include Thr218, 250–251 (VP), 280–281 (SR), Lys290, 319–320 (GL), and Glu358.

The protein belongs to the ferredoxin--NADP reductase type 1 family. As to quaternary structure, monomer. Interacts with TIC62 (via C-terminus). Requires FAD as cofactor.

The protein resides in the plastid. Its subcellular location is the chloroplast stroma. The protein localises to the chloroplast thylakoid membrane. The enzyme catalyses 2 reduced [2Fe-2S]-[ferredoxin] + NADP(+) + H(+) = 2 oxidized [2Fe-2S]-[ferredoxin] + NADPH. The protein operates within energy metabolism; photosynthesis. Its function is as follows. May play a key role in regulating the relative amounts of cyclic and non-cyclic electron flow to meet the demands of the plant for ATP and reducing power. The protein is Ferredoxin--NADP reductase, leaf isozyme, chloroplastic (PETH) of Pisum sativum (Garden pea).